A 145-amino-acid chain; its full sequence is MKALLQRVGAARVEVGGEIVGSIDRGLLVLVGVEPEDGERCAAKMLHKLLNYRVFGDDEGKMNRSLLDVQGGLLLVSQFTLAANTRSGLRPSFSSAAPPAQGETVFEHLVKLAREAYPQVATGRFGADMQVHLVNDGPVTFLLES.

Residues 137–138 (GP) carry the Gly-cisPro motif, important for rejection of L-amino acids motif.

It belongs to the DTD family. In terms of assembly, homodimer.

It localises to the cytoplasm. It catalyses the reaction glycyl-tRNA(Ala) + H2O = tRNA(Ala) + glycine + H(+). The catalysed reaction is a D-aminoacyl-tRNA + H2O = a tRNA + a D-alpha-amino acid + H(+). An aminoacyl-tRNA editing enzyme that deacylates mischarged D-aminoacyl-tRNAs. Also deacylates mischarged glycyl-tRNA(Ala), protecting cells against glycine mischarging by AlaRS. Acts via tRNA-based rather than protein-based catalysis; rejects L-amino acids rather than detecting D-amino acids in the active site. By recycling D-aminoacyl-tRNA to D-amino acids and free tRNA molecules, this enzyme counteracts the toxicity associated with the formation of D-aminoacyl-tRNA entities in vivo and helps enforce protein L-homochirality. This is D-aminoacyl-tRNA deacylase from Pseudomonas aeruginosa (strain UCBPP-PA14).